Here is a 178-residue protein sequence, read N- to C-terminus: Large ribosomal subunit protein uL16 (178 aa).

Belongs to the universal ribosomal protein uL16 family.

The polypeptide is Large ribosomal subunit protein uL16 (Saccharolobus islandicus (strain Y.N.15.51 / Yellowstone #2) (Sulfolobus islandicus)).